The chain runs to 341 residues: Phosphate acyltransferase (341 aa).

The protein belongs to the PlsX family. In terms of assembly, homodimer. Probably interacts with PlsY.

It is found in the cytoplasm. The enzyme catalyses a fatty acyl-[ACP] + phosphate = an acyl phosphate + holo-[ACP]. It participates in lipid metabolism; phospholipid metabolism. Functionally, catalyzes the reversible formation of acyl-phosphate (acyl-PO(4)) from acyl-[acyl-carrier-protein] (acyl-ACP). This enzyme utilizes acyl-ACP as fatty acyl donor, but not acyl-CoA. The sequence is that of Phosphate acyltransferase from Photobacterium profundum (strain SS9).